We begin with the raw amino-acid sequence, 136 residues long: Aspartate 1-decarboxylase (136 aa).

Ser25 acts as the Schiff-base intermediate with substrate; via pyruvic acid in catalysis. Position 25 is a pyruvic acid (Ser) (Ser25). Thr57 is a substrate binding site. Residue Tyr58 is the Proton donor of the active site. 73–75 (GAA) provides a ligand contact to substrate.

The protein belongs to the PanD family. Heterooctamer of four alpha and four beta subunits. Pyruvate is required as a cofactor. In terms of processing, is synthesized initially as an inactive proenzyme, which is activated by self-cleavage at a specific serine bond to produce a beta-subunit with a hydroxyl group at its C-terminus and an alpha-subunit with a pyruvoyl group at its N-terminus.

It is found in the cytoplasm. The catalysed reaction is L-aspartate + H(+) = beta-alanine + CO2. Its pathway is cofactor biosynthesis; (R)-pantothenate biosynthesis; beta-alanine from L-aspartate: step 1/1. Its function is as follows. Catalyzes the pyruvoyl-dependent decarboxylation of aspartate to produce beta-alanine. In Corynebacterium glutamicum (strain R), this protein is Aspartate 1-decarboxylase.